Here is a 212-residue protein sequence, read N- to C-terminus: Thiamine-phosphate synthase (212 aa).

4-amino-2-methyl-5-(diphosphooxymethyl)pyrimidine is bound by residues 40–44 (QFREK) and Asn75. Asp76 and Asp95 together coordinate Mg(2+). Ser113 is a binding site for 4-amino-2-methyl-5-(diphosphooxymethyl)pyrimidine. 2-[(2R,5Z)-2-carboxy-4-methylthiazol-5(2H)-ylidene]ethyl phosphate is bound at residue 139–141 (TTS). Residue Lys142 coordinates 4-amino-2-methyl-5-(diphosphooxymethyl)pyrimidine. Residues Gly171 and 191–192 (IS) contribute to the 2-[(2R,5Z)-2-carboxy-4-methylthiazol-5(2H)-ylidene]ethyl phosphate site.

It belongs to the thiamine-phosphate synthase family. Requires Mg(2+) as cofactor.

The enzyme catalyses 2-[(2R,5Z)-2-carboxy-4-methylthiazol-5(2H)-ylidene]ethyl phosphate + 4-amino-2-methyl-5-(diphosphooxymethyl)pyrimidine + 2 H(+) = thiamine phosphate + CO2 + diphosphate. It carries out the reaction 2-(2-carboxy-4-methylthiazol-5-yl)ethyl phosphate + 4-amino-2-methyl-5-(diphosphooxymethyl)pyrimidine + 2 H(+) = thiamine phosphate + CO2 + diphosphate. The catalysed reaction is 4-methyl-5-(2-phosphooxyethyl)-thiazole + 4-amino-2-methyl-5-(diphosphooxymethyl)pyrimidine + H(+) = thiamine phosphate + diphosphate. It participates in cofactor biosynthesis; thiamine diphosphate biosynthesis; thiamine phosphate from 4-amino-2-methyl-5-diphosphomethylpyrimidine and 4-methyl-5-(2-phosphoethyl)-thiazole: step 1/1. In terms of biological role, condenses 4-methyl-5-(beta-hydroxyethyl)thiazole monophosphate (THZ-P) and 2-methyl-4-amino-5-hydroxymethyl pyrimidine pyrophosphate (HMP-PP) to form thiamine monophosphate (TMP). The polypeptide is Thiamine-phosphate synthase (Staphylococcus saprophyticus subsp. saprophyticus (strain ATCC 15305 / DSM 20229 / NCIMB 8711 / NCTC 7292 / S-41)).